Here is a 423-residue protein sequence, read N- to C-terminus: Serine--tRNA ligase (423 aa).

230-232 (TAE) lines the L-serine pocket. 261–263 (RAE) provides a ligand contact to ATP. Glutamate 284 lines the L-serine pocket. 348-351 (EISS) lines the ATP pocket. Serine 384 contributes to the L-serine binding site.

Belongs to the class-II aminoacyl-tRNA synthetase family. Type-1 seryl-tRNA synthetase subfamily. As to quaternary structure, homodimer. The tRNA molecule binds across the dimer.

Its subcellular location is the cytoplasm. The enzyme catalyses tRNA(Ser) + L-serine + ATP = L-seryl-tRNA(Ser) + AMP + diphosphate + H(+). The catalysed reaction is tRNA(Sec) + L-serine + ATP = L-seryl-tRNA(Sec) + AMP + diphosphate + H(+). It functions in the pathway aminoacyl-tRNA biosynthesis; selenocysteinyl-tRNA(Sec) biosynthesis; L-seryl-tRNA(Sec) from L-serine and tRNA(Sec): step 1/1. Catalyzes the attachment of serine to tRNA(Ser). Is also able to aminoacylate tRNA(Sec) with serine, to form the misacylated tRNA L-seryl-tRNA(Sec), which will be further converted into selenocysteinyl-tRNA(Sec). The sequence is that of Serine--tRNA ligase from Acetivibrio thermocellus (strain ATCC 27405 / DSM 1237 / JCM 9322 / NBRC 103400 / NCIMB 10682 / NRRL B-4536 / VPI 7372) (Clostridium thermocellum).